The sequence spans 207 residues: Large ribosomal subunit protein uL4 (207 aa).

Residues 49-78 (HAVKNRSAVSGGGRKPWRQKGTGRARQGSI) form a disordered region.

It belongs to the universal ribosomal protein uL4 family. As to quaternary structure, part of the 50S ribosomal subunit.

One of the primary rRNA binding proteins, this protein initially binds near the 5'-end of the 23S rRNA. It is important during the early stages of 50S assembly. It makes multiple contacts with different domains of the 23S rRNA in the assembled 50S subunit and ribosome. Its function is as follows. Forms part of the polypeptide exit tunnel. This is Large ribosomal subunit protein uL4 from Streptococcus sanguinis (strain SK36).